The following is a 357-amino-acid chain: Pre-mRNA-splicing factor RBM22 homolog (357 aa).

A C3H1-type zinc finger spans residues 153-180; sequence RNMARVCSFWRKNSCNRGDECPYLHKEI. Positions 222–295 constitute an RRM domain; the sequence is NKICIQGISE…CNLTVHLQDN (74 aa).

It belongs to the SLT11 family. As to quaternary structure, probable component of the spliceosome C complex.

The protein localises to the nucleus. In terms of biological role, involved in pre-mRNA splicing. Binds RNA. In Plasmodium falciparum (isolate 3D7), this protein is Pre-mRNA-splicing factor RBM22 homolog.